A 118-amino-acid polypeptide reads, in one-letter code: Large ribosomal subunit protein uL18 (118 aa).

The protein belongs to the universal ribosomal protein uL18 family. In terms of assembly, part of the 50S ribosomal subunit; part of the 5S rRNA/L5/L18/L25 subcomplex. Contacts the 5S and 23S rRNAs.

This is one of the proteins that bind and probably mediate the attachment of the 5S RNA into the large ribosomal subunit, where it forms part of the central protuberance. The sequence is that of Large ribosomal subunit protein uL18 from Parvibaculum lavamentivorans (strain DS-1 / DSM 13023 / NCIMB 13966).